The chain runs to 425 residues: Na(+)/H(+) antiporter NhaA 1 (425 aa).

Helical transmembrane passes span 20–40 (AGGV…NSPL), 65–85 (PHLW…GLEI), 102–122 (LPFI…LAVT), 131–151 (GWAI…ALLG), 160–180 (LFLT…IALA), 183–203 (ASIK…MMAM), 218–238 (FVLL…AGVL), 272–292 (FLIV…GFSL), 303–323 (IAAG…WAAV), 342–362 (LSVL…LAFA), and 373–393 (LGVI…LRFA).

This sequence belongs to the NhaA Na(+)/H(+) (TC 2.A.33) antiporter family.

It localises to the cell inner membrane. It carries out the reaction Na(+)(in) + 2 H(+)(out) = Na(+)(out) + 2 H(+)(in). Its function is as follows. Na(+)/H(+) antiporter that extrudes sodium in exchange for external protons. The sequence is that of Na(+)/H(+) antiporter NhaA 1 from Novosphingobium aromaticivorans (strain ATCC 700278 / DSM 12444 / CCUG 56034 / CIP 105152 / NBRC 16084 / F199).